Consider the following 157-residue polypeptide: Galactose-specific lectin (157 aa).

The 146-residue stretch at 12–157 (SIVVGTWGAE…LDYIGFHLAL (146 aa)) folds into the Jacalin-type lectin domain. Asn-45 carries an N-linked (GlcNAc...) asparagine glycan.

It belongs to the jacalin lectin family. In terms of assembly, tetramer of heterodimers of light and heavy chains which are non-covalently linked. In terms of processing, N-linked carbohydrates at Asn-45 can be of complex or paucimannose type.

In terms of biological role, alpha-D-galactose-specific lectin. Has hemagglutinating activity towards human and rabbit erythrocytes. Is highly cytotoxic to human cells in vitro. The sequence is that of Galactose-specific lectin from Morus indica (Mulberry).